The primary structure comprises 183 residues: 2-C-methyl-D-erythritol 2,4-cyclodiphosphate synthase (183 aa).

The a divalent metal cation site is built by D8 and H10. Residues 8-10 (DVH) and 34-35 (HS) contribute to the 4-CDP-2-C-methyl-D-erythritol 2-phosphate site. H42 is an a divalent metal cation binding site. 4-CDP-2-C-methyl-D-erythritol 2-phosphate-binding positions include 56-58 (DIG), 61-65 (FPDTD), 132-135 (TTEE), and F139.

This sequence belongs to the IspF family. As to quaternary structure, homotrimer. A divalent metal cation is required as a cofactor.

It carries out the reaction 4-CDP-2-C-methyl-D-erythritol 2-phosphate = 2-C-methyl-D-erythritol 2,4-cyclic diphosphate + CMP. Its pathway is isoprenoid biosynthesis; isopentenyl diphosphate biosynthesis via DXP pathway; isopentenyl diphosphate from 1-deoxy-D-xylulose 5-phosphate: step 4/6. Functionally, involved in the biosynthesis of isopentenyl diphosphate (IPP) and dimethylallyl diphosphate (DMAPP), two major building blocks of isoprenoid compounds. Catalyzes the conversion of 4-diphosphocytidyl-2-C-methyl-D-erythritol 2-phosphate (CDP-ME2P) to 2-C-methyl-D-erythritol 2,4-cyclodiphosphate (ME-CPP) with a corresponding release of cytidine 5-monophosphate (CMP). The protein is 2-C-methyl-D-erythritol 2,4-cyclodiphosphate synthase of Lachnospira eligens (strain ATCC 27750 / DSM 3376 / VPI C15-48 / C15-B4) (Eubacterium eligens).